The sequence spans 373 residues: Flagellar P-ring protein (373 aa).

The signal sequence occupies residues 1-27 (MPSFSPTLLKLAAAALSALLLSGVAAS).

Belongs to the FlgI family. The basal body constitutes a major portion of the flagellar organelle and consists of four rings (L,P,S, and M) mounted on a central rod.

It is found in the periplasm. The protein resides in the bacterial flagellum basal body. Its function is as follows. Assembles around the rod to form the L-ring and probably protects the motor/basal body from shearing forces during rotation. This chain is Flagellar P-ring protein, found in Rhodopseudomonas palustris (strain BisB5).